A 511-amino-acid chain; its full sequence is Pentatricopeptide repeat-containing protein At5g08510 (511 aa).

PPR repeat units lie at residues 46–80 (CTFLYNKLIQAYYVHHQPHESIVLYNLLSFDGLRP), 81–115 (SHHTFNFIFAASASFSSARPLRLLHSQFFRSGFES), 116–146 (DSFCCTTLITAYAKLGALCCARRVFDEMSKR), 147–181 (DVPVWNAMITGYQRRGDMKAAMELFDSMPRKNVTS), 182–213 (WTTVISGFSQNGNYSEALKMFLCMEKDKSVKP), 214–248 (NHITVVSVLPACANLGELEIGRRLEGYARENGFFD), 249–279 (NIYVCNATIEMYSKCGMIDVAKRLFEELGNQ), 281–315 (NLCSWNSMIGSLATHGKHDEALTLFAQMLREGEKP), 316–346 (DAVTFVGLLLACVHGGMVVKGQELFKSMEEV), and 352–382 (KLEHYGCMIDLLGRVGKLQEAYDLIKTMPMK). Positions 387 to 462 (VWGTLLGACS…AAGYSYFVEV (76 aa)) are type E motif. A type E(+) motif region spans residues 463–494 (GVDVHKFTVEDKSHPRSYEIYQVLEEIFRRMK).

This sequence belongs to the PPR family. PCMP-E subfamily.

This chain is Pentatricopeptide repeat-containing protein At5g08510 (PCMP-E20), found in Arabidopsis thaliana (Mouse-ear cress).